A 414-amino-acid chain; its full sequence is Serine--tRNA ligase (414 aa).

Position 230–232 (threonine 230–glutamate 232) interacts with L-serine. Arginine 261–glutamate 263 provides a ligand contact to ATP. Glutamate 284 is a binding site for L-serine. Position 348-351 (glutamate 348–serine 351) interacts with ATP. Serine 382 serves as a coordination point for L-serine.

The protein belongs to the class-II aminoacyl-tRNA synthetase family. Type-1 seryl-tRNA synthetase subfamily. In terms of assembly, homodimer. The tRNA molecule binds across the dimer.

Its subcellular location is the cytoplasm. The catalysed reaction is tRNA(Ser) + L-serine + ATP = L-seryl-tRNA(Ser) + AMP + diphosphate + H(+). It carries out the reaction tRNA(Sec) + L-serine + ATP = L-seryl-tRNA(Sec) + AMP + diphosphate + H(+). It participates in aminoacyl-tRNA biosynthesis; selenocysteinyl-tRNA(Sec) biosynthesis; L-seryl-tRNA(Sec) from L-serine and tRNA(Sec): step 1/1. In terms of biological role, catalyzes the attachment of serine to tRNA(Ser). Is also able to aminoacylate tRNA(Sec) with serine, to form the misacylated tRNA L-seryl-tRNA(Sec), which will be further converted into selenocysteinyl-tRNA(Sec). The chain is Serine--tRNA ligase from Sulfurovum sp. (strain NBC37-1).